A 670-amino-acid polypeptide reads, in one-letter code: Outer dynein arm-docking complex subunit 1 (670 aa).

Coiled-coil stretches lie at residues 9–155, 183–224, and 302–381; these read SKEV…RYLN, AVRE…EQLH, and NFIN…IQLL. The disordered stretch occupies residues 454–473; it reads KMAPLQPPDTLEDPPGFEAS. Phosphoserine is present on Ser517. Disordered regions lie at residues 526-596 and 616-670; these read AGSS…ASSG and VGSS…DSRG. Polar residues predominate over residues 584–596; it reads GHVTFGSTSASSG. Residues 650 to 670 show a composition bias toward low complexity; sequence SSTGPASSTGPGSSTSKDSRG.

It belongs to the ODA1/DCC2 family. Component of the outer dynein arm-docking complex along with ODAD2, ODAD3, ODAD4 and CLXN. Interacts with ODAD3. Interacts with ODAD4; this interaction may facilitate the recruitment and/or attachment of outer dynein arm docking complex proteins, including ODAD1, ODAD3, and ODAD4 to ciliary axonemes. Interacts with DNAH9. Interacts with MNS1. Interacts with PIERCE1 and PIERCE2; the interactions link the outer dynein arms docking complex (ODA-DC) to the internal microtubule inner proteins (MIP) in cilium axoneme. Expressed in nasal epithelial cells. Highly expressed in testis and also detected in lung, brain and kidney.

Its subcellular location is the cytoplasm. The protein resides in the cytoskeleton. It is found in the cilium axoneme. In terms of biological role, component of the outer dynein arm-docking complex (ODA-DC) that mediates outer dynein arms (ODA) binding onto the doublet microtubule. Involved in mediating assembly of both ODAs and their axonemal docking complex onto ciliary microtubules. This is Outer dynein arm-docking complex subunit 1 from Homo sapiens (Human).